We begin with the raw amino-acid sequence, 407 residues long: Indoleamine 2,3-dioxygenase 1 (407 aa).

Residue H350 coordinates heme b. Residues 362 to 407 (SKKKPTDGDKSEEPSNVESRGTGGTNPMTFLRSVKDTTEKALLSWP) are disordered. The span at 365–374 (KPTDGDKSEE) shows a compositional bias: basic and acidic residues.

The protein belongs to the indoleamine 2,3-dioxygenase family. In terms of assembly, monomer. Heme b is required as a cofactor. As to expression, highly expressed in epididymis, duodemum, jejunum, ileum, colon and spleen. Highly expressed in epididymis, prostate, duodemum, jejunum, ileum, colon and spleen, not detected in the liver (at protein level). Expressed in tumors only upon exposure to IFN gamma. Constitutively expressed in placenta in trophoblast cells. Expression is restricted to perinuclear regions of primary trophoblast giant cells (TGCs) of fetal origin at mid-gestation (10.5 dpc). After placentation (14 dpc), no IDO expression was detected at the maternal-fetal interface.

It is found in the cytoplasm. The protein resides in the cytosol. It carries out the reaction D-tryptophan + O2 = N-formyl-D-kynurenine. The enzyme catalyses L-tryptophan + O2 = N-formyl-L-kynurenine. Its activity is regulated as follows. Activity is inhibited by and MTH-trp (methylthiohydantoin-DL-tryptophan), modestly inhibited by L-1MT (1-methyl-L-tryptophan) but not D-1MT (1-methyl-D-tryptophan). In terms of biological role, catalyzes the first and rate limiting step of the catabolism of the essential amino acid tryptophan along the kynurenine pathway. Involved in the peripheral immune tolerance, contributing to maintain homeostasis by preventing autoimmunity or immunopathology that would result from uncontrolled and overreacting immune responses. Tryptophan shortage inhibits T lymphocytes division and accumulation of tryptophan catabolites induces T-cell apoptosis and differentiation of regulatory T-cells. Acts as a suppressor of anti-tumor immunity. Limits the growth of intracellular pathogens by depriving tryptophan. Protects the fetus from maternal immune rejection. The sequence is that of Indoleamine 2,3-dioxygenase 1 from Mus musculus (Mouse).